Consider the following 743-residue polypeptide: Polyribonucleotide nucleotidyltransferase (743 aa).

Mg(2+) contacts are provided by D489 and D495. Residues 556–618 enclose the KH domain; the sequence is PRIEKMHIGK…PCIDAAIGMI (63 aa). The S1 motif domain maps to 628 to 698; the sequence is GETYPGKITS…KTGKFKLSRK (71 aa). The tract at residues 704-743 is disordered; sequence PEGYVEPQPRERRERREGGREGGRNFERRGGDRDHREPRG.

Belongs to the polyribonucleotide nucleotidyltransferase family. Mg(2+) serves as cofactor.

Its subcellular location is the cytoplasm. It carries out the reaction RNA(n+1) + phosphate = RNA(n) + a ribonucleoside 5'-diphosphate. In terms of biological role, involved in mRNA degradation. Catalyzes the phosphorolysis of single-stranded polyribonucleotides processively in the 3'- to 5'-direction. This chain is Polyribonucleotide nucleotidyltransferase, found in Porphyromonas gingivalis (strain ATCC 33277 / DSM 20709 / CIP 103683 / JCM 12257 / NCTC 11834 / 2561).